The following is a 411-amino-acid chain: Basic leucine zipper 10 (411 aa).

Disordered regions lie at residues 1–36 (MNSI…DEVS), 76–99 (SLPS…DSGN), 140–251 (SVKP…NDLK), and 362–411 (NNFA…KCVD). Polar residues predominate over residues 24–36 (PDSSKPVTADEVS). The segment covering 89-98 (DSRFRDRDSG) has biased composition (basic and acidic residues). 2 stretches are compositionally biased toward polar residues: residues 146–173 (STSS…TSSL) and 183–193 (SMKQVTSGSSR). At S196 the chain carries Phosphoserine. Residues 196–206 (SDDEDLDEENE) are compositionally biased toward acidic residues. The region spanning 215–278 (DVKKSRRMLS…DEAAVGNRIL (64 aa)) is the bZIP domain. A basic motif region spans residues 217–236 (KKSRRMLSNRESARRSRRRK). The Nuclear localization signal motif lies at 219-226 (SRRMLSNR). The leucine-zipper stretch occupies residues 243–257 (LETQVNDLKGEHSSL). Over residues 368-390 (PSQTSSPLQRIRNGQNHHVTPSA) the composition is skewed to polar residues.

It belongs to the bZIP family. Forms a heterodimer with BZIP1, BZIP2, BZIP9, BZIP11, BZIP44, BZIP53 and BZIP63. Interacts with ABI3 and forms a complex made of ABI3, BZIP53 and BZIP10. Binding with LSD1 leads to cytoplasmic retention. Expressed in roots, shoots, stems, young leaves, trichomes, hydathodes, siliques, seeds, and flowers, mostly in vascular tissues.

The protein localises to the nucleus. Its subcellular location is the cytoplasm. Functionally, transcription factor that binds to the C-box-like motif (5'-TGCTGACGTCA-3') and G-box-like motif (5'-CCACGTGGCC-3'), ABRE elements, of gene promoters. Binds to the 5'-ACGT-3' motif of seed storage protein (SSP) encoding gene promoters (e.g. At2S and CRU3) and promotes their expression in seeds when in complex with ABI3 and BZIP53. Involved in the defense responses to the biotrophic pathogen Hyaloperonospora parasitica and oxidative stress responses; mediates positively cell death. Promotes BZIP53-mediated response to hypoosmolarity stress that leads to POX1/PRODH1 accumulation. In Arabidopsis thaliana (Mouse-ear cress), this protein is Basic leucine zipper 10 (BZIP10).